Consider the following 400-residue polypeptide: MGGWSSKPRKGMGTNLSVPNPLGFFPDHQLDPAFGANSNNPDWDFNPIKDHWPAANQVGVGAFGPGFTPPHGGILGWSPQAQGILTTVSTIPPPASTNRQSGRQPTPISPPLRDSHPQAMQWNSTAFHQTLQDPRVRGLYLPAGGSSSGTVNPAPNIASHISSISARTGDPVTNMENITSGFLGPLLVLQAGFFLLTRILTIPQSLDSWWTSLNFLGGSPVCLGQNSQSPTSNHSPTSCPPICPGYRWMCLRRFIIFLFILLLCLIFLLVLLDYQGMLPVCPLIPGSTTTSTGPCKTCTTPAQGNSMFPSCCCTKPTDGNCTCIPIPSSWAFAKFLWEWASVRFSWLSLLVPFVQWFVGLSPTVWLSAIWMMWYWGPSLYSIVRPFIPLLPIFFCLWVYI.

Residue Met1 is modified to N-acetylmethionine. Disordered stretches follow at residues 1–20 (MGGW…SVPN) and 88–115 (VSTI…LRDS). Gly2 is lipidated: N-myristoyl glycine; by host. A pre-S1 region spans residues 2–119 (GGWSSKPRKG…PPLRDSHPQA (118 aa)). Positions 2–174 (GGWSSKPRKG…SARTGDPVTN (173 aa)) are pre-S. Residues 2–181 (GGWSSKPRKG…VTNMENITSG (180 aa)) are Virion surface; in external conformation-facing. Residues 2–253 (GGWSSKPRKG…PGYRWMCLRR (252 aa)) are Intravirion; in internal conformation-facing. The N-linked (GlcNAc...) asparagine glycan is linked to Trp4. Positions 88–106 (VSTIPPPASTNRQSGRQPT) are enriched in polar residues. The tract at residues 120–174 (MQWNSTAFHQTLQDPRVRGLYLPAGGSSSGTVNPAPNIASHISSISARTGDPVTN) is pre-S2. Residues 182–202 (FLGPLLVLQAGFFLLTRILTI) traverse the membrane as a helical segment. Residues 203 to 253 (PQSLDSWWTSLNFLGGSPVCLGQNSQSPTSNHSPTSCPPICPGYRWMCLRR) are Intravirion; in external conformation-facing. Residues 254–274 (FIIFLFILLLCLIFLLVLLDY) traverse the membrane as a helical segment. Residues 275 to 348 (QGMLPVCPLI…WASVRFSWLS (74 aa)) lie on the Virion surface side of the membrane. Asn320 is a glycosylation site (N-linked (GlcNAc...) asparagine; by host). A helical membrane pass occupies residues 349-369 (LLVPFVQWFVGLSPTVWLSAI). The Intravirion segment spans residues 370–375 (WMMWYW). A helical membrane pass occupies residues 376–398 (GPSLYSIVRPFIPLLPIFFCLWV). At 399-400 (YI) the chain is on the virion surface side.

This sequence belongs to the orthohepadnavirus major surface antigen family. In terms of assembly, in its internal form (Li-HBsAg), interacts with the capsid protein and with the isoform S. Interacts with host chaperone CANX. Associates with host chaperone CANX through its pre-S2 N glycan; this association may be essential for isoform M proper secretion. As to quaternary structure, interacts with isoform L. Interacts with the antigens of satellite virus HDV (HDVAgs); this interaction is required for encapsidation of HDV genomic RNA. Isoform M is N-terminally acetylated by host at a ratio of 90%, and N-glycosylated by host at the pre-S2 region. In terms of processing, myristoylated.

It is found in the virion membrane. The large envelope protein exists in two topological conformations, one which is termed 'external' or Le-HBsAg and the other 'internal' or Li-HBsAg. In its external conformation the protein attaches the virus to cell receptors and thereby initiating infection. This interaction determines the species specificity and liver tropism. This attachment induces virion internalization predominantly through caveolin-mediated endocytosis. The large envelope protein also assures fusion between virion membrane and endosomal membrane. In its internal conformation the protein plays a role in virion morphogenesis and mediates the contact with the nucleocapsid like a matrix protein. Functionally, the middle envelope protein plays an important role in the budding of the virion. It is involved in the induction of budding in a nucleocapsid independent way. In this process the majority of envelope proteins bud to form subviral lipoprotein particles of 22 nm of diameter that do not contain a nucleocapsid. The chain is Large envelope protein from Homo sapiens (Human).